A 361-amino-acid polypeptide reads, in one-letter code: Phosphoserine aminotransferase (361 aa).

Arg43 lines the L-glutamate pocket. Pyridoxal 5'-phosphate is bound by residues 77-78 (AS), Trp103, Thr153, Asp173, and Gln196. Position 197 is an N6-(pyridoxal phosphate)lysine (Lys197). 238 to 239 (NT) serves as a coordination point for pyridoxal 5'-phosphate.

Belongs to the class-V pyridoxal-phosphate-dependent aminotransferase family. SerC subfamily. Homodimer. Pyridoxal 5'-phosphate is required as a cofactor.

Its subcellular location is the cytoplasm. It carries out the reaction O-phospho-L-serine + 2-oxoglutarate = 3-phosphooxypyruvate + L-glutamate. The catalysed reaction is 4-(phosphooxy)-L-threonine + 2-oxoglutarate = (R)-3-hydroxy-2-oxo-4-phosphooxybutanoate + L-glutamate. It participates in amino-acid biosynthesis; L-serine biosynthesis; L-serine from 3-phospho-D-glycerate: step 2/3. The protein operates within cofactor biosynthesis; pyridoxine 5'-phosphate biosynthesis; pyridoxine 5'-phosphate from D-erythrose 4-phosphate: step 3/5. Its function is as follows. Catalyzes the reversible conversion of 3-phosphohydroxypyruvate to phosphoserine and of 3-hydroxy-2-oxo-4-phosphonooxybutanoate to phosphohydroxythreonine. The polypeptide is Phosphoserine aminotransferase (Pseudomonas syringae pv. syringae (strain B728a)).